The primary structure comprises 466 residues: MSHPGWIMVSFLTELLSQSSKGIAQSLDNCANDTEIINALLKDSYNKHYIPSHPTHVRVDMWVQEVTSVSELTQDFEIDLYINEFWEDPALVYEDMNPCKRNISFDDKVLQRLWLPNTCFINSKSAAIHESPFKNVFLMVFSNGTLWTNYRMKLTGPCDMKLKRFPFDKQKCYLTFESFNYNTGEVRMQWNQPYPVILLKRIELPDFKLVNFSVIAVEQMYPAGWWDELTVAFVFERRYGWYVLQGYIPTMVTIVISWISFYLGPRAIPARTMLGVNSLLAMTFQFGNIIRNLPRVSYVKAIDVWMLSGMLFIFLSLLELAVVGFMSRNEGLPPKVKKRKRQEDDDEGFSWKSMQTSPHLELRQFWVDKRVNSLRNDSAVPPVEDYAPMELEQPYQNITKRREKRKWMSGLRKKWRAMRELRPETVDFYSAIFFPTAYMLFNISYWSFYLTSLSEYFDEDVNIDQP.

The signal sequence occupies residues 1–24; that stretch reads MSHPGWIMVSFLTELLSQSSKGIA. The Extracellular portion of the chain corresponds to 25 to 242; the sequence is QSLDNCANDT…FVFERRYGWY (218 aa). N-linked (GlcNAc...) asparagine glycosylation is found at Asn32, Asn102, and Asn143. Residues Cys158 and Cys172 are joined by a disulfide bond. The N-linked (GlcNAc...) asparagine glycan is linked to Asn211. The helical transmembrane segment at 243–263 threads the bilayer; it reads VLQGYIPTMVTIVISWISFYL. Residues 264–272 lie on the Cytoplasmic side of the membrane; sequence GPRAIPART. A helical membrane pass occupies residues 273 to 290; sequence MLGVNSLLAMTFQFGNII. Residues 291 to 304 lie on the Extracellular side of the membrane; that stretch reads RNLPRVSYVKAIDV. A helical transmembrane segment spans residues 305-325; sequence WMLSGMLFIFLSLLELAVVGF. At 326–427 the chain is on the cytoplasmic side; that stretch reads MSRNEGLPPK…MRELRPETVD (102 aa). The segment at 333–352 is disordered; it reads PPKVKKRKRQEDDDEGFSWK. Residues 428–448 form a helical membrane-spanning segment; it reads FYSAIFFPTAYMLFNISYWSF. At 449–466 the chain is on the extracellular side; the sequence is YLTSLSEYFDEDVNIDQP.

Belongs to the ligand-gated ion channel (TC 1.A.9) family. As to quaternary structure, homopentamer (in vitro). Forms heteropentamers composed of acc-1 and acc-4 or acc-1 and acc-3. Both homopentamers and heteropentamers form functional ion channels. In terms of tissue distribution, expressed in a subset of cholinergic motor neurons including cholinergic motor neurons in the ventral cord, the retrovesicular ganglion and in head neurons such as the SMD, RMD motor neurons, the AVA and AVE command interneurons and the SAA neurons. Also expressed in a small number of glutamatergic neurons including the pharyngeal neurons MI and M3, the PLM neurons and a pair of neurons in the lateral ganglion.

Its subcellular location is the cell membrane. Functionally, acetylcholine-gated chloride channel subunit. Forms functional homopentameric (in vitro) and functional heteropentameric ion channels with acc-3 and acc-4 ion channel subunits. Currents in channels are triggered in response to acetylcholine, but not in response to GABA, glutamate, glycine, histamine or dopamine. The chain is Acetylcholine-gated chloride channel subunit acc-1 from Caenorhabditis elegans.